The chain runs to 854 residues: Patatin-like phospholipase domain-containing protein CHGG_02900 (854 aa).

Disordered stretches follow at residues 1 to 29 (MAGP…YGFP), 58 to 138 (LSAP…PPLS), and 159 to 186 (QRRV…RSKD). Over residues 96-116 (DLARRPESSGVGFHDEDRTAR) the composition is skewed to basic and acidic residues. Residues 119-132 (PAGAATAAAAGVAT) are compositionally biased toward low complexity. Residues 199–219 (WPLLGVVTCWLVGLSVVHVLA) form a helical membrane-spanning segment. One can recognise a PNPLA domain in the interval 387–578 (LCLSGGATFA…RTDIPIKALN (192 aa)). Positions 418-422 (GTSGG) match the GXSXG motif. The active-site Nucleophile is S420. The active-site Proton acceptor is the D565. 2 disordered regions span residues 724 to 776 (RENR…SILS) and 791 to 830 (RGGI…LEFG). Residues 729-751 (GGGLGDGGVGSSGGAGGGAGGGQ) are compositionally biased toward gly residues. The span at 752–761 (AEAVAGQAAG) shows a compositional bias: low complexity. Acidic residues predominate over residues 799–812 (TESEDETSDLDADF).

It belongs to the PLPL family.

The protein resides in the membrane. Functionally, probable lipid hydrolase. The sequence is that of Patatin-like phospholipase domain-containing protein CHGG_02900 from Chaetomium globosum (strain ATCC 6205 / CBS 148.51 / DSM 1962 / NBRC 6347 / NRRL 1970) (Soil fungus).